The sequence spans 230 residues: Cytidylate kinase (230 aa).

Residue 12 to 20 (GPSGAGKGT) participates in ATP binding.

Belongs to the cytidylate kinase family. Type 1 subfamily.

The protein resides in the cytoplasm. The catalysed reaction is CMP + ATP = CDP + ADP. It catalyses the reaction dCMP + ATP = dCDP + ADP. The chain is Cytidylate kinase from Shewanella sp. (strain W3-18-1).